The sequence spans 273 residues: 4-hydroxy-tetrahydrodipicolinate reductase (273 aa).

Residues 12–17 (GAGGRM) and Glu38 contribute to the NAD(+) site. Arg39 provides a ligand contact to NADP(+). NAD(+) contacts are provided by residues 102-104 (GTT) and 126-129 (AANF). His159 functions as the Proton donor/acceptor in the catalytic mechanism. A (S)-2,3,4,5-tetrahydrodipicolinate-binding site is contributed by His160. The Proton donor role is filled by Lys163. 169 to 170 (GT) is a binding site for (S)-2,3,4,5-tetrahydrodipicolinate.

This sequence belongs to the DapB family. Homotetramer.

The protein localises to the cytoplasm. The enzyme catalyses (S)-2,3,4,5-tetrahydrodipicolinate + NAD(+) + H2O = (2S,4S)-4-hydroxy-2,3,4,5-tetrahydrodipicolinate + NADH + H(+). It catalyses the reaction (S)-2,3,4,5-tetrahydrodipicolinate + NADP(+) + H2O = (2S,4S)-4-hydroxy-2,3,4,5-tetrahydrodipicolinate + NADPH + H(+). It participates in amino-acid biosynthesis; L-lysine biosynthesis via DAP pathway; (S)-tetrahydrodipicolinate from L-aspartate: step 4/4. Its function is as follows. Catalyzes the conversion of 4-hydroxy-tetrahydrodipicolinate (HTPA) to tetrahydrodipicolinate. This chain is 4-hydroxy-tetrahydrodipicolinate reductase, found in Pectobacterium atrosepticum (strain SCRI 1043 / ATCC BAA-672) (Erwinia carotovora subsp. atroseptica).